The chain runs to 274 residues: Protein TIC 20-I, chloroplastic (274 aa).

The N-terminal 65 residues, 1–65, are a transit peptide targeting the chloroplast; the sequence is MITGYSTPSA…ELPRVSRGVP (65 aa). The next 4 membrane-spanning stretches (helical) occupy residues 130 to 152, 167 to 187, 200 to 220, and 229 to 249; these read LPYLMPLHETWMYAETAYHLHPF, IGRLPSWFLMAYFFVAYLGIV, VVMGMLLEIALQVIGTVSKWM, and FGMHFWTAVAFAYLFTVLESI.

This sequence belongs to the Tic20 family. In terms of assembly, part of the Tic complex. Component of the 1-MD complex, composed of TIC20-I, TIC214, TIC100 and TIC56. Interacts with the translocating preproteins. Hydrolysis of ATP is essential for the formation of this complex. The 1-MD complex interacts with TIC21. In terms of tissue distribution, expressed in leaves, shoots and roots. High expression in mature photosynthetic tissues. Lower levels in non-photosynthetic tissues and roots.

It is found in the plastid. Its subcellular location is the chloroplast inner membrane. Functionally, involved in protein precursor import into chloroplasts. May be part of an intermediate translocation complex acting as a protein-conducting channel at the inner envelope. Seems to be specific for photosynthesis-related pre-proteins. Partially redundant with TIC20-IV, but not with TIC20-II or TIC20-V. In Arabidopsis thaliana (Mouse-ear cress), this protein is Protein TIC 20-I, chloroplastic.